A 97-amino-acid polypeptide reads, in one-letter code: MKCICSIYKSPRRREMYLYVAKKDALSRVPEGLLAAFGTPQHAFDLVLMPERRLAREDIHKVLENLEKQGYHLQMPPPEEEYVEHLPDELLRMNDPV.

The YcgL domain occupies 3–87 (CICSIYKSPR…PEEEYVEHLP (85 aa)).

This Azotobacter vinelandii (strain DJ / ATCC BAA-1303) protein is YcgL domain-containing protein Avin_32960.